Reading from the N-terminus, the 121-residue chain is MLTKKEQRLRRSRQTRIRIAQQGVVRLTVNRTNLHIYASVISEDGSRVLASASTAEAEVRKELGGSGKGGNAAAAQMIGKRIAEKAKAAGIEKVAFDRAGFAYHGRVKALAEAAREAGLQF.

It belongs to the universal ribosomal protein uL18 family. Part of the 50S ribosomal subunit; part of the 5S rRNA/L5/L18/L25 subcomplex. Contacts the 5S and 23S rRNAs.

This is one of the proteins that bind and probably mediate the attachment of the 5S RNA into the large ribosomal subunit, where it forms part of the central protuberance. In Paracidovorax citrulli (strain AAC00-1) (Acidovorax citrulli), this protein is Large ribosomal subunit protein uL18.